Consider the following 142-residue polypeptide: Mitochondrial import receptor subunit TOM22 homolog (142 aa).

A compositionally biased stretch (low complexity) spans 1-11; that stretch reads MAAAVAAAGAG. The segment at 1-40 is disordered; the sequence is MAAAVAAAGAGEPLSPEELVPKAEAEKAEEDLEEDDDDEL. Ala2 is modified (N-acetylalanine). At 2–82 the chain is on the cytoplasmic side; that stretch reads AAAVAAAGAG…VAQKMYRFSR (81 aa). Ser15 is subject to Phosphoserine. Over residues 27 to 40 the composition is skewed to acidic residues; sequence KAEEDLEEDDDDEL. Positions 41–50 are import sequence; necessary for mitochondrion outer membrane localization and integration in the TOM complex; sequence DETLSERLWG. Position 43 is a phosphothreonine (Thr43). The residue at position 45 (Ser45) is a Phosphoserine. A helical membrane pass occupies residues 83-103; that stretch reads AALWIGTTSFMILVLPVVFET. A TMD; necessary for mitochondrion outer membrane localization and integration in the TOM complex region spans residues 83–103; that stretch reads AALWIGTTSFMILVLPVVFET. Over 104–142 the chain is Mitochondrial intermembrane; that stretch reads EKLQMEQQQQLQQRQILLGPNTGLSGGMPGALPPLPGKI. The interval 123-142 is C-tail signal; necessary for mitochondrion outer membrane localization and integration in the TOM complex; that stretch reads PNTGLSGGMPGALPPLPGKI.

The protein belongs to the Tom22 family. Forms part of the preprotein translocase complex of the outer mitochondrial membrane (TOM complex) which consists of at least 7 different proteins (TOMM5, TOMM6, TOMM7, TOMM20, TOMM22, TOMM40 and TOMM70). Interacts with TOMM40. Interacts with PPP2R2B.

It localises to the mitochondrion outer membrane. Its function is as follows. Central receptor component of the translocase of the outer membrane of mitochondria (TOM complex) responsible for the recognition and translocation of cytosolically synthesized mitochondrial preproteins. Together with the peripheral receptor TOM20 functions as the transit peptide receptor and facilitates the movement of preproteins into the translocation pore. Required for the translocation across the mitochondrial outer membrane of cytochrome P450 monooxygenases. The protein is Mitochondrial import receptor subunit TOM22 homolog (Tomm22) of Rattus norvegicus (Rat).